Reading from the N-terminus, the 110-residue chain is BolA-like protein 3 (110 aa).

Belongs to the BolA/IbaG family. In terms of assembly, interacts with NFU1.

It localises to the mitochondrion. Acts as a mitochondrial iron-sulfur (Fe-S) cluster assembly factor that facilitates (Fe-S) cluster insertion into a subset of mitochondrial proteins. Probably acts together with NFU1. In Mus musculus (Mouse), this protein is BolA-like protein 3 (Bola3).